The chain runs to 130 residues: Small ribosomal subunit protein uS9 (130 aa).

The disordered stretch occupies residues 105–130 (TRDPRMKERKKYGLKKARRAPQFSKR). The span at 111–130 (KERKKYGLKKARRAPQFSKR) shows a compositional bias: basic residues.

It belongs to the universal ribosomal protein uS9 family.

This Acetivibrio thermocellus (strain ATCC 27405 / DSM 1237 / JCM 9322 / NBRC 103400 / NCIMB 10682 / NRRL B-4536 / VPI 7372) (Clostridium thermocellum) protein is Small ribosomal subunit protein uS9.